The sequence spans 58 residues: Conotoxin Im5.4 (58 aa).

The signal sequence occupies residues 1–18 (MRCLPVVVFLLLLLSAAA). Positions 19–28 (APGVGSKTER) are excised as a propeptide.

This sequence belongs to the conotoxin T superfamily. Contains 2 disulfide bonds that can be either 'C1-C3, C2-C4' or 'C1-C4, C2-C3', since these disulfide connectivities have been observed for conotoxins with cysteine framework V (for examples, see AC P0DQQ7 and AC P81755). As to expression, expressed by the venom duct.

The protein resides in the secreted. Probable neurotoxin. This chain is Conotoxin Im5.4, found in Conus imperialis (Imperial cone).